The sequence spans 493 residues: Cytochrome P450 710A3 (493 aa).

Residues 5-25 (VSLFASLTPYLVSALLLFLLL) form a helical membrane-spanning segment. Cys435 contributes to the heme binding site.

It belongs to the cytochrome P450 family. It depends on heme as a cofactor. Expressed in stems. Detected in primary root caps and immature petals.

The protein localises to the membrane. The enzyme catalyses 5-dehydroepisterol + NADPH + O2 + H(+) = ergosta-5,7,22,24(28)-tetraen-3beta-ol + NADP(+) + 2 H2O. Functionally, required to form the C-22 double bond in the sterol side chain. Possesses in vitro C-22 desaturase activity toward beta-sitosterol and produces stigmasterol. The protein is Cytochrome P450 710A3 of Arabidopsis thaliana (Mouse-ear cress).